A 383-amino-acid chain; its full sequence is Processive diacylglycerol beta-glucosyltransferase (383 aa).

It belongs to the glycosyltransferase 28 family. UgtP subfamily.

Its subcellular location is the cell membrane. It carries out the reaction a 1,2-diacyl-3-O-(beta-D-glucopyranosyl)-sn-glycerol + UDP-alpha-D-glucose = a 1,2-diacyl-3-O-(beta-D-Glc-(1-&gt;6)-beta-D-Glc)-sn-glycerol + UDP + H(+). The catalysed reaction is a 1,2-diacyl-3-O-(beta-D-Glc-(1-&gt;6)-beta-D-Glc)-sn-glycerol + UDP-alpha-D-glucose = a 1,2-diacyl-3-O-(beta-D-Glc-(1-&gt;6)-beta-D-Glc-(1-&gt;6)-beta-D-Glc)-sn-glycerol + UDP + H(+). It catalyses the reaction a 1,2-diacyl-sn-glycerol + UDP-alpha-D-glucose = a 1,2-diacyl-3-O-(beta-D-glucopyranosyl)-sn-glycerol + UDP + H(+). Its pathway is glycolipid metabolism; diglucosyl-diacylglycerol biosynthesis. Processive glucosyltransferase involved in the biosynthesis of both the bilayer- and non-bilayer-forming membrane glucolipids. Is able to successively transfer up to three glucosyl residues to diacylglycerol (DAG), thereby catalyzing the formation of beta-monoglucosyl-DAG (3-O-(beta-D-glucopyranosyl)-1,2-diacyl-sn-glycerol), beta-diglucosyl-DAG (3-O-(beta-D-glucopyranosyl-beta-(1-&gt;6)-D-glucopyranosyl)-1,2-diacyl-sn-glycerol) and beta-triglucosyl-DAG (3-O-(beta-D-glucopyranosyl-beta-(1-&gt;6)-D-glucopyranosyl-beta-(1-&gt;6)-D-glucopyranosyl)-1,2-diacyl-sn-glycerol). Beta-diglucosyl-DAG is the predominant glycolipid found in Bacillales and is also used as a membrane anchor for lipoteichoic acid (LTA). The protein is Processive diacylglycerol beta-glucosyltransferase of Bacillus pumilus (strain SAFR-032).